We begin with the raw amino-acid sequence, 423 residues long: Lipid droplet-regulating VLDL assembly factor AUP1 (423 aa).

Over 1–19 (METRGIEQMFDFQRLPNDR) the chain is Cytoplasmic. An intramembrane segment occupies 20 to 40 (FILLLLLLYAPVGFCLMLLRI). The Cytoplasmic portion of the chain corresponds to 41 to 423 (FIGVHVFLVS…KHGLNKEDDL (383 aa)). Positions 304–346 (RIARLAQQVKEVLPDVPVSVITRDLLQTNCVDTTITNLLERTD) constitute a CUE domain. A disordered region spans residues 355–392 (TMPSGPGKAAASSTPSAMVSSPNLKPAAKSFGRSPIDR). The segment covering 365 to 377 (ASSTPSAMVSSPN) has biased composition (polar residues).

This sequence belongs to the AUP1 family.

It localises to the endoplasmic reticulum membrane. Its subcellular location is the lipid droplet. Functionally, plays a role in the translocation of terminally misfolded proteins from the endoplasmic reticulum lumen to the cytoplasm and their degradation by the proteasome. Plays a role in lipid droplet formation. Induces lipid droplet clustering. This is Lipid droplet-regulating VLDL assembly factor AUP1 from Danio rerio (Zebrafish).